Consider the following 387-residue polypeptide: Probable WRKY transcription factor 36 (387 aa).

The segment at residues 197-264 (CEDPSINDGC…YEGNHDHPLP (68 aa)) is a DNA-binding region (WRKY). Positions 322-366 (RPNYPNQLPDDYPLSSSSFSLNFSSPDPPPPSSHDHTLNFSGLRT) are disordered. The span at 329 to 346 (LPDDYPLSSSSFSLNFSS) shows a compositional bias: low complexity.

It is found in the nucleus. Transcription factor. Interacts specifically with the W box (5'-(T)TGAC[CT]-3'), a frequently occurring elicitor-responsive cis-acting element. This chain is Probable WRKY transcription factor 36 (WRKY36), found in Arabidopsis thaliana (Mouse-ear cress).